The primary structure comprises 245 residues: Brasilane terpene glycosides biosynthesis cluster protein D (245 aa).

2 C3H1-type zinc fingers span residues 121–152 and 161–185; these read KELKIICPWWLTDGYSCREHDQGKCPFYHDNV and ICHFWADGGRCTKSQKDCRFAHYPA. Residues 186–245 form a disordered region; the sequence is PHRVTAPMPSKKKSKKLRSSVADDASHPDLGKARRHDPRDDEQNDEVWRNQGRARPGQEW. A compositionally biased stretch (basic and acidic residues) spans 209–226; sequence DASHPDLGKARRHDPRDD.

Its function is as follows. Part of the gene cluster that mediates the biosynthesis of the brasilane terpene glycosides brasilane D and E. The biosynthesis starts with the activity of the terpene cyclase braA that converts farnesyl pyrophosphate into the sesquiterpene alcohol trichobrasilenol. Subsequently, trichobrasilenol is glycosylated by the O-glycosyltransferase braB putatively using UDP-GlcNAc as sugar donor to yield brasilane A. The latter then undergoes two rounds of oxidation performed by the cytochrome P450 monooxygenase braC. In the first round braC hydroxylates C-12 forming brasilane D, which serves as substrate in the second round to establish the epoxide at the bond between C-5 and C-10 and oxidize the alcohol at C-12 to an aldehyde leading to the final product brasilane E. The sequence is that of Brasilane terpene glycosides biosynthesis cluster protein D from Annulohypoxylon truncatum (Hypoxylon truncatum).